A 1733-amino-acid chain; its full sequence is MKKRRQGPINKRVDFLSNKVNKYSIRKFTVGTASILVGATLMFGAADNEAKAAEDNQLESASKEEQKGSRDNENSKLNQVDLDNGSHSSEKTTNVNNATEVKKVEAPTTSDVSKPKANEAVVTNESTKPKTTEAPTVNEESIAETPKTSTTQQDSTEKNNPSLKDNLNSSSTTSKESKTDEHSTKQAQMSTNKSNLDTNDSPTQSEKTSSQANNDSTDNQSAPSKQLDSKPSEQKVYKTKFNDEPTQDVEHTTTKLKTPSVSTDSSVNDKQDYTRSAVASLGVDSNETEAITNAVRDNLDLKAASREQINEAIIAEALKKDFSNPDYGVDTPLALNRSQSKNSPHKSASPRMNLMSLAAEPNSGKNVNDKVKITNPTLSLNKSNNHANNVIWPTSNEQFNLKANYELDDSIKEGDTFTIKYGQYIRPGGLELPAIKTQLRSKDGSIVANGVYDKTTNTTTYTFTNYVDQYQNITGSFDLIATPKRETAIKDNQNYPMEVTIANEVVKKDFIVDYGNKKDNTTTAAVANVDNVNNKHNEVVYLNQNNQNPKYAKYFSTVKNGEFIPGEVKVYEVTDTNAMVDSFNPDLNSSNVKDVTSQFAPKVSADGTRVDINFARSMANGKKYIVTQAVRPTGTGNVYTEYWLTRDGTTNTNDFYRGTKSTTVTYLNGSSTAQGDNPTYSLGDYVWLDKNKNGVQDDDEKGLAGVYVTLKDSNNRELQRVTTDQSGHYQFDNLQNGTYTVEFAIPDNYTPSPANNSTNDAIDSDGERDGTRKVVVAKGTINNADNMTVDTGFYLTPKYNVGDYVWEDTNKDGIQDDNEKGISGVKVTLKNKNGDTIGTTTTDSNGKYEFTGLENGDYTIEFETPEGYTPTKQNSGSDEGKDSNGTKTTVTVKDADNKTIDSGFYKPTYNLGDYVWEDTNKDGIQDDSEKGISGVKVTLKDKNGNAIGTTTTDASGHYQFKGLENGSYTVEFETPSGYTPTKANSGQDITVDSNGITTTGIINGADNLTIDSGFYKTPKYSVGDYVWEDTNKDGIQDDNEKGISGVKVTLKDEKGNIISTTTTDENGKYQFDNLDSGNYIIHFEKPEGMTQTTANSGNDDEKDADGEDVRVTITDHDDFSIDNGYFDDDSDSDSDADSDSDSDSDSDADSDSDADSDSDADSDSDSDSDSDADSDSDSDSDSDSDSDSDADSDSDSDSDSDADSDSDSDSDSDSDSDSDSDSDSDSDSDSDSDSDSDSDSDSDSDADSDSDADSDSDSDSDSDADSDSDSDSDSDADSDSDSDSDSDSDSDSDADSDSDSDSDSDSDSDSDSDSDSDSDSDSDADSDSDSDSDSDSDSDSDSDSDSDSDSDSDADSDADSDSDADSDSDADSDSDSDSDSDADSDSDSDSDSDSDSDSDSDSDSDSDSDSDSDSDSDADSDSDSDSDSDSDSDSDADSDSDSDSDSDADSDSDSDSDSDADSDSDSDSDSDADSDSDSDSDSDSDSDSDADSDSDSDSDSDSDSDSDSDSDSDSDSDSDSDSDSDSDSDSDSDSDSDSDSDSDSDSDSDSDSDSDSDSDSDSDSDSDSDSDSDSDSDSDSDSDSDSDSDSDSDSDSDSDSDSDSDSDSDSDSDSDSDSDSDADSDSDSDSDSDADSDSDSDSDSDSDSDSDSDSDSDSDSDSDSDSDSDSDSDSDSDSDSDSDSDSDKNAKDKLPDTGANEDHDSKGTLLGTLFAGLGALLLGRRRKKDNKEK.

Positions 1–45 (MKKRRQGPINKRVDFLSNKVNKYSIRKFTVGTASILVGATLMFGA) are cleaved as a signal peptide. Residues 46 to 678 (ADNEAKAAED…GSSTAQGDNP (633 aa)) form a ligand binding A region region. Disordered stretches follow at residues 51–269 (KAAE…SVND) and 332–351 (PLAL…ASPR). Basic and acidic residues predominate over residues 61–74 (ASKEEQKGSRDNEN). Polar residues-rich tracts occupy residues 85–99 (GSHS…NNAT) and 146–168 (PKTS…DNLN). Residues 175 to 184 (KESKTDEHST) are compositionally biased toward basic and acidic residues. The segment covering 186–226 (QAQMSTNKSNLDTNDSPTQSEKTSSQANNDSTDNQSAPSKQ) has biased composition (polar residues). The span at 227 to 253 (LDSKPSEQKVYKTKFNDEPTQDVEHTT) shows a compositional bias: basic and acidic residues. 2 stretches are compositionally biased toward polar residues: residues 255–266 (KLKTPSVSTDSS) and 336–346 (NRSQSKNSPHK). 4 consecutive CNA-B domains span residues 679–797 (TYSL…YLTP), 798–907 (KYNV…FYKP), 908–1018 (TYNL…YKTP), and 1019–1129 (KYSV…FDDD). The type I collagen binding region stretch occupies residues 679-1129 (TYSLGDYVWL…SIDNGYFDDD (451 aa)). Residues 862-890 (FETPEGYTPTKQNSGSDEGKDSNGTKTTV) are disordered. A disordered region spans residues 1085–1708 (KPEGMTQTTA…ANEDHDSKGT (624 aa)). The segment covering 1107-1119 (EDVRVTITDHDDF) has biased composition (basic and acidic residues). Positions 1125–1684 (YFDDDSDSDS…DSDSDSDSDS (560 aa)) are enriched in acidic residues. A compositionally biased stretch (basic and acidic residues) spans 1685–1706 (DSDKNAKDKLPDTGANEDHDSK). The short motif at 1694-1698 (LPDTG) is the LPXTG sorting signal element. T1697 is modified (pentaglycyl murein peptidoglycan amidated threonine). Residues 1698–1733 (GANEDHDSKGTLLGTLFAGLGALLLGRRRKKDNKEK) constitute a propeptide, removed by sortase.

Belongs to the serine-aspartate repeat-containing protein (SDr) family.

It is found in the secreted. It localises to the cell wall. Its function is as follows. Binds to type I collagen via alpha-2(I) or alpha-1(I) chains, although its affinity for the alpha-1(I) chain is significantly higher. Involved in bacterial adherence to transcutaneous drivelines from explanted ventricular assist devices. The polypeptide is Serine-aspartate repeat-containing protein F (sdrF) (Staphylococcus epidermidis).